The following is a 172-amino-acid chain: 3-hydroxydecanoyl-[acyl-carrier-protein] dehydratase (172 aa).

Residue His-71 is part of the active site.

It belongs to the thioester dehydratase family. FabA subfamily. In terms of assembly, homodimer.

The protein resides in the cytoplasm. The enzyme catalyses a (3R)-hydroxyacyl-[ACP] = a (2E)-enoyl-[ACP] + H2O. The catalysed reaction is (3R)-hydroxydecanoyl-[ACP] = (2E)-decenoyl-[ACP] + H2O. It catalyses the reaction (2E)-decenoyl-[ACP] = (3Z)-decenoyl-[ACP]. It participates in lipid metabolism; fatty acid biosynthesis. Functionally, necessary for the introduction of cis unsaturation into fatty acids. Catalyzes the dehydration of (3R)-3-hydroxydecanoyl-ACP to E-(2)-decenoyl-ACP and then its isomerization to Z-(3)-decenoyl-ACP. Can catalyze the dehydratase reaction for beta-hydroxyacyl-ACPs with saturated chain lengths up to 16:0, being most active on intermediate chain length. This chain is 3-hydroxydecanoyl-[acyl-carrier-protein] dehydratase, found in Escherichia coli O6:K15:H31 (strain 536 / UPEC).